The sequence spans 424 residues: UDP-N-acetylglucosamine 1-carboxyvinyltransferase (424 aa).

22 to 23 (KN) contributes to the phosphoenolpyruvate binding site. R93 contributes to the UDP-N-acetyl-alpha-D-glucosamine binding site. Residue C117 is the Proton donor of the active site. 2-(S-cysteinyl)pyruvic acid O-phosphothioketal is present on C117. Residues 122-126 (RPVDL), D307, and I329 each bind UDP-N-acetyl-alpha-D-glucosamine.

This sequence belongs to the EPSP synthase family. MurA subfamily.

The protein localises to the cytoplasm. It carries out the reaction phosphoenolpyruvate + UDP-N-acetyl-alpha-D-glucosamine = UDP-N-acetyl-3-O-(1-carboxyvinyl)-alpha-D-glucosamine + phosphate. It functions in the pathway cell wall biogenesis; peptidoglycan biosynthesis. In terms of biological role, cell wall formation. Adds enolpyruvyl to UDP-N-acetylglucosamine. The polypeptide is UDP-N-acetylglucosamine 1-carboxyvinyltransferase (Chlorobaculum parvum (strain DSM 263 / NCIMB 8327) (Chlorobium vibrioforme subsp. thiosulfatophilum)).